Consider the following 125-residue polypeptide: Large ribosomal subunit protein bL12 (125 aa).

Belongs to the bacterial ribosomal protein bL12 family. As to quaternary structure, homodimer. Part of the ribosomal stalk of the 50S ribosomal subunit. Forms a multimeric L10(L12)X complex, where L10 forms an elongated spine to which 2 to 4 L12 dimers bind in a sequential fashion. Binds GTP-bound translation factors.

Its function is as follows. Forms part of the ribosomal stalk which helps the ribosome interact with GTP-bound translation factors. Is thus essential for accurate translation. The chain is Large ribosomal subunit protein bL12 from Helicobacter pylori (strain ATCC 700392 / 26695) (Campylobacter pylori).